Here is a 431-residue protein sequence, read N- to C-terminus: Histidinol dehydrogenase (431 aa).

3 residues coordinate NAD(+): Tyr124, Gln187, and Asn210. Positions 236, 258, and 261 each coordinate substrate. Residues Gln258 and His261 each contribute to the Zn(2+) site. Active-site proton acceptor residues include Glu325 and His326. Substrate is bound by residues His326, Asp359, Glu413, and His418. Asp359 lines the Zn(2+) pocket. His418 lines the Zn(2+) pocket.

Belongs to the histidinol dehydrogenase family. The cofactor is Zn(2+).

The enzyme catalyses L-histidinol + 2 NAD(+) + H2O = L-histidine + 2 NADH + 3 H(+). The protein operates within amino-acid biosynthesis; L-histidine biosynthesis; L-histidine from 5-phospho-alpha-D-ribose 1-diphosphate: step 9/9. In terms of biological role, catalyzes the sequential NAD-dependent oxidations of L-histidinol to L-histidinaldehyde and then to L-histidine. This Legionella pneumophila (strain Paris) protein is Histidinol dehydrogenase.